A 148-amino-acid chain; its full sequence is 3-dehydroquinate dehydratase (148 aa).

The Proton acceptor role is filled by tyrosine 24. Residues asparagine 75, histidine 81, and aspartate 88 each coordinate substrate. Histidine 101 functions as the Proton donor in the catalytic mechanism. Substrate is bound by residues leucine 102–serine 103 and arginine 112.

This sequence belongs to the type-II 3-dehydroquinase family. In terms of assembly, homododecamer.

The catalysed reaction is 3-dehydroquinate = 3-dehydroshikimate + H2O. Its pathway is metabolic intermediate biosynthesis; chorismate biosynthesis; chorismate from D-erythrose 4-phosphate and phosphoenolpyruvate: step 3/7. Catalyzes a trans-dehydration via an enolate intermediate. This chain is 3-dehydroquinate dehydratase, found in Bartonella henselae (strain ATCC 49882 / DSM 28221 / CCUG 30454 / Houston 1) (Rochalimaea henselae).